The chain runs to 233 residues: Small ribosomal subunit protein uS3 (233 aa).

The KH type-2 domain maps to 39–107 (VRQFLNKELE…PAQINIAEVR (69 aa)).

This sequence belongs to the universal ribosomal protein uS3 family. As to quaternary structure, part of the 30S ribosomal subunit. Forms a tight complex with proteins S10 and S14.

Functionally, binds the lower part of the 30S subunit head. Binds mRNA in the 70S ribosome, positioning it for translation. The chain is Small ribosomal subunit protein uS3 from Edwardsiella ictaluri (strain 93-146).